Consider the following 1262-residue polypeptide: Separin homolog sep-1 (1262 aa).

Positions 957–1051 (VQNAYYILDP…SVRTIPQALG (95 aa)) constitute a Peptidase C50 domain. Cysteine 1040 is a catalytic residue. Positions 1147-1262 (KDQRNLPQTP…ARTPSRSRNL (116 aa)) are disordered. Composition is skewed to polar residues over residues 1151 to 1162 (NLPQTPKTSART) and 1177 to 1197 (FVTSKSVPMTPIFSNNENKSP). Residues 1243–1262 (TPTTRTTRSSARTPSRSRNL) are compositionally biased toward low complexity.

In terms of assembly, forms a complex with securin-like protein ify-1 (via C-terminus). Interaction with ify-1 stabilizes sep-1. Also maintains the complex in the cytoplasm during interphase and recruits it to chromosomes during the first meiotic division. In terms of tissue distribution, expressed in oocytes. Expressed in male germline. Expressed in spermatocytes but undetectable in spermatids (at protein level).

Its subcellular location is the cytoplasm. It localises to the chromosome. It is found in the cytoplasmic granule. The protein localises to the cytoskeleton. The protein resides in the microtubule organizing center. Its subcellular location is the centrosome. It localises to the spindle. It is found in the cleavage furrow. The protein localises to the midbody. The enzyme catalyses All bonds known to be hydrolyzed by this endopeptidase have arginine in P1 and an acidic residue in P4. P6 is often occupied by an acidic residue or by a hydroxy-amino-acid residue, the phosphorylation of which enhances cleavage.. Probably maintained in an inactive state via its interaction with securin ify-1 which acts as a pseudosubstrate thereby blocking access to the catalytic site. Upon ify-1 degradation at the onset of anaphase, sep-1 is likely to become active. In addition, interaction with ify-1 stabilizes sep-1. Cysteine protease, which plays a central role in homologous chromosome separation during meiosis I and in sister chromatid separation during embryonic mitosis. Promotes chromosome/sister chromatid segregation by cleaving the scc-1 (mitosis) and rec-8 (meiosis) subunits of the cohesin complex at the onset of anaphase. May cleave histone H3-like protein cpar-1 during meiosis I metaphase-anaphase transition. Promotes cortical granule exocytosis after oocyte fertilization during the first meiotic anaphase. Essential for embryonic cytokinesis by regulating rab-11-positive vesicle trafficking at the plasma membrane at the cleavage furrow and midbody. Regulates centriole segregation during spermatocyte meiosis. Required for embryonic anterior-posterior axis formation. The protein is Separin homolog sep-1 of Caenorhabditis elegans.